The chain runs to 170 residues: Zinc finger matrin-type protein 5 (170 aa).

The C3H1-type zinc-finger motif lies at 51–79 (EQNKRPCRKFLLTGQCDFGSNCRFSHMSE). The tract at residues 150-170 (PPSLRAPPPGGWPLQPRVQWG) is disordered.

Component of the U11/U12 snRNPs that are part of the U12-type spliceosome. Not found in the major spliceosome.

It is found in the nucleus. The sequence is that of Zinc finger matrin-type protein 5 (ZMAT5) from Homo sapiens (Human).